We begin with the raw amino-acid sequence, 354 residues long: G-protein coupled receptor homolog US28 (354 aa).

The Extracellular segment spans residues 1–37 (MTPTTTTAELTTEFDYDEDATPCVFTDVLNQSKPVTL). Residue asparagine 30 is glycosylated (N-linked (GlcNAc...) asparagine; by host). A helical membrane pass occupies residues 38–58 (FLYGVVFLFGSIGNFLVIFTI). Residues 59–69 (TWRRRIQCSGD) are Cytoplasmic-facing. Residues 70–90 (VYFINLAAADLLFVCTLPLWM) form a helical membrane-spanning segment. At 91–101 (QYLLDHNSLAS) the chain is on the extracellular side. The helical transmembrane segment at 102–122 (VPCTLLTACFYVAMFASLCFI) threads the bilayer. Topologically, residues 123–145 (TEIALDRYYAIVYMRYRPVKQAC) are cytoplasmic. The helical transmembrane segment at 146-166 (LFSIFWWIFAVIIAIPHFMVV) threads the bilayer. Topologically, residues 167 to 183 (TKKDNQCMTDYDYLEVS) are extracellular. Residues 184-204 (YPIILNVELMLGAFVIPLSVI) traverse the membrane as a helical segment. Residues 205–228 (SYCYYRISRIVAVSQSRHKGRIVR) are Cytoplasmic-facing. A helical membrane pass occupies residues 229 to 249 (VLIAVVLVFIIFWLPYHLTLF). The Extracellular segment spans residues 250-273 (VDTLKLLKWISSSCEFERSLKRAL). Residues 274-294 (ILTESLAFCHCCLNPLLYVFV) form a helical membrane-spanning segment. The Cytoplasmic portion of the chain corresponds to 295 to 354 (GTKFRQELHCLLAEFRQRLFSRDVSWYHSMSFSRRSSPSRRETSSDTLSDEVCRVSQIIP).

It belongs to the G-protein coupled receptor 1 family. As to quaternary structure, interacts with host GPRASP1; this interaction targets US28 to lysosomes for degradation. Interacts with host CX3CL1/Fractalkine (via N-terminus). Interacts with host Gi alpha-1 subunit GNAI1; this interaction does not lead to the catalytic activation of Gi complex. Phosphorylated. High phosphorylation occurs concomitantly with receptor endocytosis and correlate with low receptor presence at the plasma membrane.

Its subcellular location is the host cell membrane. Binds to a great number of different CC-chemokines including CCL5/RANTES, CCL2/MCP-1, CCL3/MIP-1-alpha as well as CX3CL1/Fractalkine. Transduces signals resulting in the activation of MAP kinase signaling pathways and augmentation of intracellular calcium ion levels, leading to alterations in chemotactic behavior of vascular smooth muscle cells and macrophages. The US28 receptor also exhibits high levels of agonist-independent signaling activity and agonist-independent endocytosis. Interacts with the host Gi complex without activating it, thereby probably interfering with the chemokine-Gi signaling. May also function as a G protein sink to sequester G protein from the cell surface via internalization. Interacts with endogenous Gaq/11 subunits and thereby constitutively activates phospholipase C. The sequence is that of G-protein coupled receptor homolog US28 (US28) from Homo sapiens (Human).